The chain runs to 594 residues: Suppressor of hairless protein (594 aa).

The disordered stretch occupies residues 20–87 (ETTVVNPNGS…QQQQQHQQQM (68 aa)). Low complexity predominate over residues 58–87 (QQQQQQLQVHHQQQQQQQQQQQQQQHQQQM). DNA-binding stretches follow at residues 131–141 (QKSYGNEKRFF), 239–244 (SKPSKK), and 266–271 (RLRSQT). The 91-residue stretch at 429 to 519 (PIVNSLNLNG…YATGLTFTYT (91 aa)) folds into the IPT/TIG domain. Low complexity-rich tracts occupy residues 542-562 (NNNN…AGSP) and 569-580 (QQQQQQHQALPS). Residues 542-594 (NNNNNITSISNNNNSNNAGSPAAGGGLQQQQQQHQALPSISEVQWNSHGSGLS) are disordered. Residues 582 to 594 (SEVQWNSHGSGLS) are compositionally biased toward polar residues.

This sequence belongs to the Su(H) family. As to quaternary structure, interacts with activated cleaved Notch. Interacts with Hairless, this interaction preventing its DNA-binding activity. Interacts with insv (via BEN domain).

It localises to the nucleus. The protein resides in the cytoplasm. Functionally, transcriptional regulator that plays a central role in Notch signaling, a signaling pathway involved in cell-cell communication that regulates a broad spectrum of cell-fate determinations. Binds directly the 5'-GTGRGAR-3' DNA consensus sequence, which is present in the regulatory region of several genes. Acts as a transcriptional repressor when it is not associated with Notch proteins. When associated with some Notch protein, it acts as a transcriptional activator that activates transcription of Notch target genes. Required for transcription of Sim. Specifically binds to the immunoglobulin kappa-type J segment recombination signal sequence. Required for neurogenesis in imaginal disks. In the larval brain, might play a role as a transducer of Notch signaling during type II neuroblast development. Also functions independently of the Notch pathway, in the development of the bristle sensory organ precursor cell. In Drosophila melanogaster (Fruit fly), this protein is Suppressor of hairless protein (Su(H)).